Here is a 364-residue protein sequence, read N- to C-terminus: Medium-wave-sensitive opsin 1 (364 aa).

A disordered region spans residues 1 to 24 (MAQRWDPQRLAGGQPQDSHEDSTQ). The Extracellular portion of the chain corresponds to 1–52 (MAQRWDPQRLAGGQPQDSHEDSTQSSIFTYTNSNATRGPFEGPNYHIAPRWV). The tract at residues 17–43 (DSHEDSTQSSIFTYTNSNATRGPFEGP) is required for 11-cis-retinal regeneration. An N-linked (GlcNAc...) asparagine glycan is attached at asparagine 34. The chain crosses the membrane as a helical span at residues 53–77 (YHITSTWMIIVVIASVFTNGLVLVA). At 78–89 (TMKFKKLRHPLN) the chain is on the cytoplasmic side. Residues 90–115 (WILVNLAIADLAETVIASTISVVNQL) traverse the membrane as a helical segment. The Extracellular segment spans residues 116-129 (YGYFVLGHPLCVVE). A disulfide bridge connects residues cysteine 126 and cysteine 203. Residues 130–149 (GYTVSVCGITGLWSLAIISW) traverse the membrane as a helical segment. Residues 150–168 (ERWLVVCKPFGNMRFDAKL) are Cytoplasmic-facing. Residues 169–192 (AIVGIAFSWIWSAVWTAPPIFGWS) traverse the membrane as a helical segment. Over 193-218 (RYWPYGLKTSCGPDVFSGTSYPGVQS) the chain is Extracellular. A helical membrane pass occupies residues 219-246 (YMMVLMVTCCIIPLSIIILCYLQVWLAI). Residues 247–268 (RAVAKQQKESESTQKAEKEVTR) lie on the Cytoplasmic side of the membrane. The helical transmembrane segment at 269 to 292 (MVVVMVFAYCLCWGPYTFFACFAT) threads the bilayer. Residues 293–300 (ANPGYAFH) lie on the Extracellular side of the membrane. Residues 301–320 (PLVAALPAYFAKSATIYNPI) form a helical membrane-spanning segment. The residue at position 312 (lysine 312) is an N6-(retinylidene)lysine. Residues 321-364 (IYVFMNRQFRNCILQLFGKKVDDTSELSSASKTEASSVSSVSPA) lie on the Cytoplasmic side of the membrane.

It belongs to the G-protein coupled receptor 1 family. Opsin subfamily. Monomer. Homodimer. Homotetramer. Post-translationally, O-glycosylated. In terms of processing, phosphorylated on some or all of the serine and threonine residues present in the C-terminal region. As to expression, expressed in cone photoreceptor cells.

The protein localises to the membrane. Functionally, visual pigments are the light-absorbing molecules that mediate vision. They consist of an apoprotein, opsin, covalently linked to cis-retinal. May increase spectral sensitivity in dim light. In Sciurus carolinensis (Eastern gray squirrel), this protein is Medium-wave-sensitive opsin 1 (OPN1MW).